The following is a 410-amino-acid chain: Succinyl-CoA:(R)-benzylsuccinate CoA-transferase subunit BbsE (410 aa).

It belongs to the CoA-transferase III family. Heterotetramer composed of 2 BbsE subunits and 2 BbsF subunits.

The catalysed reaction is (R)-2-benzylsuccinate + succinyl-CoA = (R)-2-benzylsuccinyl-CoA + succinate. Its pathway is xenobiotic degradation; toluene degradation. Inhibited by (S)-benzylsuccinyl-CoA. Functionally, catalyzes the reversible conversion of (R)-2-benzylsuccinate to (R)-2-benzylsuccinyl-CoA. Inactive with (S)-benzylsuccinate. The polypeptide is Succinyl-CoA:(R)-benzylsuccinate CoA-transferase subunit BbsE (bbsE) (Thauera aromatica).